Reading from the N-terminus, the 492-residue chain is Catalase-1 (492 aa).

Residues histidine 65 and asparagine 138 contribute to the active site. Heme is bound at residue tyrosine 348.

The protein belongs to the catalase family. In terms of assembly, homotetramer. Heme serves as cofactor.

The protein localises to the peroxisome. Its subcellular location is the glyoxysome. The catalysed reaction is 2 H2O2 = O2 + 2 H2O. Occurs in almost all aerobically respiring organisms and serves to protect cells from the toxic effects of hydrogen peroxide. The protein is Catalase-1 (CAT1) of Triticum aestivum (Wheat).